An 82-amino-acid polypeptide reads, in one-letter code: Small ribosomal subunit protein eS21 (82 aa).

The protein belongs to the eukaryotic ribosomal protein eS21 family.

The polypeptide is Small ribosomal subunit protein eS21 (RPS21) (Oryza sativa subsp. japonica (Rice)).